We begin with the raw amino-acid sequence, 308 residues long: MKITPIAFESLGVRSQATLIETKDLRVLVDPAISLAPRRYNLPPHQREVDRLTELAKVLVDVAKDVDVIIVSHYHYDHHDPGYVIPTDIYKNKLVFIKDPQNMINNSQKYRRAPRFLRSIKDKPSKIEIADGKTFEVGHTTISFSPAVPHGADERLGYVIQVAISDKDSTVIFTSDIEGAPKDVHLKFTKEKMPKTIIIDGPLSYLLGRVLKEEELEKSIRNMEEIVKNGLETVIIDHHVLRDINYAEVLKPVYDIAKDLGVRVTTAAEYLNLEPLILEARRKELFKEDNRPARLPRGLANLLSAGEG.

Belongs to the UPF0282 family.

In Saccharolobus islandicus (strain M.14.25 / Kamchatka #1) (Sulfolobus islandicus), this protein is UPF0282 protein M1425_2116.